The chain runs to 149 residues: MNKGQRHIKIREIITNYEIETQDDLVDRLKSDGYNVTQATVSRDIKELHLVKVPLQDGRYKYSLPADQKFNPQQKLKRILTDSFISIDRTGNLVVMKAMPGNANAIAVLIDNLDWNELMGTICGDDTILIICRTERDGQVVTERFLNML.

The protein belongs to the ArgR family.

The protein resides in the cytoplasm. Its pathway is amino-acid biosynthesis; L-arginine biosynthesis [regulation]. Its function is as follows. Regulates arginine biosynthesis genes. The sequence is that of Arginine repressor from Shouchella clausii (strain KSM-K16) (Alkalihalobacillus clausii).